A 494-amino-acid chain; its full sequence is NADPH:adrenodoxin oxidoreductase, mitochondrial (494 aa).

The transit peptide at 1 to 34 directs the protein to the mitochondrion; it reads MAPRCWRWWSWSAWPGVRPLPSRSTPTPGFCKKF. Alanine 51, glutamate 72, leucine 80, and valine 116 together coordinate FAD. Residues 187-190, 231-232, and glutamate 243 each bind NADP(+); these read QGNV and RR. Position 313 is a phosphoserine (serine 313). FAD-binding positions include tryptophan 401 and 408-410; that span reads GVI. Glycine 408 is a binding site for NADP(+).

This sequence belongs to the ferredoxin--NADP reductase type 1 family. In terms of assembly, monomer. Interacts directly with FDX1. Requires FAD as cofactor.

The protein resides in the mitochondrion inner membrane. It carries out the reaction 2 reduced [adrenodoxin] + NADP(+) + H(+) = 2 oxidized [adrenodoxin] + NADPH. The enzyme catalyses 2 reduced [2Fe-2S]-[ferredoxin] + NADP(+) + H(+) = 2 oxidized [2Fe-2S]-[ferredoxin] + NADPH. It functions in the pathway steroid metabolism; cholesterol metabolism. In terms of biological role, serves as the first electron transfer protein in all the mitochondrial P450 systems including cholesterol side chain cleavage in all steroidogenic tissues, steroid 11-beta hydroxylation in the adrenal cortex, 25-OH-vitamin D3-24 hydroxylation in the kidney, and sterol C-27 hydroxylation in the liver. Also acts as a ferredoxin--NADP(+) reductase essential for coenzyme Q biosynthesis: together with FDX2, transfers the electrons required for the hydroxylation reaction performed by COQ6. This is NADPH:adrenodoxin oxidoreductase, mitochondrial (Fdxr) from Rattus norvegicus (Rat).